The sequence spans 544 residues: U1 small nuclear ribonucleoprotein component PRP42 (544 aa).

HAT repeat units follow at residues 7-39 (LIHDENFSTLTLNVSRYPKSLAYWEKLLNYIVK), 51-83 (QLLKLIRCTYSSMLNEFPYLENYYIDFALLEYK), 85-118 (GNVSMSHKIFQRGLQAFNQRSLLLWTSYLKFCNN), 121-156 (SHQKQLFKKYETAEEYVGLHFFSGEFWDLYLEQISS), and 163-195 (KYWNVLRKILEIPLHSFSKFYALWLQRIDDIMD). A Nuclear localization signal motif is present at residues 230 to 235 (KKKLKK). HAT repeat units lie at residues 255-288 (FESKIYINYYTSPETLVSSDEIETWIKYLDYTIT), 290-322 (QTDSLTHLNFQRALLPLAHYDLVWIKYSKWLIN), 366-397 (NLLEKIESSYSDNVENVDDFEIFWDYLQFKTF), and 456-488 (VEKNIFQKIIEFGWEYYLQNGMFWNCYCRLIYF).

In terms of assembly, component of the 18S U1 snRNP particle, a subcomplex of the spliceosome.

The protein localises to the nucleus. In terms of biological role, essential component of the U1 snRNP particle, which recognizes and binds the 5'-splice site of pre-mRNA. Together with other non-snRNP factors, U1 snRNP forms the spliceosomal commitment complex, that targets pre-mRNA to the splicing pathway. U1 snRNP is cotranscriptionally recruited to intron-containing genes. Required for U1 snRNP biogenesis. This is U1 small nuclear ribonucleoprotein component PRP42 (PRP42) from Saccharomyces cerevisiae (strain ATCC 204508 / S288c) (Baker's yeast).